Consider the following 398-residue polypeptide: Small ribosomal subunit protein mS78 (rPPR3a) (398 aa).

The transit peptide at 1–19 (MSSLSRVLRGTFNTCPIRR) directs the protein to the mitochondrion. 7 PPR repeats span residues 108–142 (KEGFAARIISLYGKAGMFENAQKVFEEMPNRDCKR), 143–173 (SVLSFNALLSAYRLSKKFDVVEELFNELPGK), 179–213 (DIVSYNTLIKALCEKDSLPEAVALLDEIENKGLKP), 214–248 (DIVTFNTLLLSSYLKGQFELGEEIWAKMVEKNVAI), 249–283 (DIRTYNARLLGLANEAKSKELVNLFGELKASGLKP), 284–318 (DVFSFNAMIRGSINEGKMDEAEAWYKEIVKHGYRP), and 319–353 (DKATFALLLPAMCKAGDFESAIELFKETFSKRYLV).

It belongs to the PPR family. P subfamily. As to quaternary structure, component of the mitochondrial ribosome small subunit.

Its subcellular location is the mitochondrion. The chain is Small ribosomal subunit protein mS78 (rPPR3a) from Arabidopsis thaliana (Mouse-ear cress).